The following is a 229-amino-acid chain: Sugar fermentation stimulation protein homolog (229 aa).

This sequence belongs to the SfsA family.

The chain is Sugar fermentation stimulation protein homolog from Clostridium novyi (strain NT).